A 633-amino-acid polypeptide reads, in one-letter code: MARTPAKYCDLVMKGGITSGIVYPNAALALARDYRFKNIGGTSAGAIAAAACAAAAVGDRRKQMKAAIAQPEERVGFEGLAKASANLASPGFIKDLLQPAAGAGQAFRLLVTLAGNTGVLRKGVALLGSVVRIAPVETLLLLAALAGLAYAVGGQTGMIAAALPAAICAYLGGVVFAVLRIARVLRRNLMGLCTGTAPDQPARRPRMVLTDWLHETLQALSGKASGQPLTFGDLWTAERYPGEPGSDRAVTLKMITTGISHQEPRSLPFESALFWFRRKEFEALFPKVVVDWMVEKAGEPVTVAGEDYYLLPHGADMPVLVATRMSLSFPLLISAVPLHEPARRESLPGSDGENEAEDTTSDEDEQKTVLDSTEALTTGGKKRRARPAAFRICWFSDGGISSNFPIHLFDRALPRWPTFAINLVYPETSDTGSRPEVFLPENNRQGWQRHYQPIARKSAVHELCAFVFAIVATMQNWRDLLQSRAPGHRERIVHVSLSPQEGGLNLAMSKEVLAAVSKKGTAAGEAFARFSFENHYWIRWRNLASALQRYTIDIAASDAYRPKIPDYEPAYALAHDATSKPPSYRFASKAEREEAARLLEKLIGEGEKWSGEGPDLTKTAPRPLPQLQIAPTY.

The PNPLA domain occupies 11–410 (LVMKGGITSG…SSNFPIHLFD (400 aa)). 3 helical membrane passes run 38–58 (NIGG…AAVG), 133–153 (IAPV…YAVG), and 159–179 (IAAA…FAVL). Positions 41–45 (GTSAG) match the GXSXG motif. Serine 43 (nucleophile) is an active-site residue. The segment at 342 to 380 (ARRESLPGSDGENEAEDTTSDEDEQKTVLDSTEALTTGG) is disordered. The span at 352–365 (GENEAEDTTSDEDE) shows a compositional bias: acidic residues. The Proton acceptor role is filled by aspartate 397. Positions 397–399 (DGG) match the DGA/G motif. Residues 605-624 (EGEKWSGEGPDLTKTAPRPL) are disordered.

The protein localises to the cell membrane. Functionally, this protein is non-essential for R.meliloti growth, but induces a heat-shock response in temperature-sensitive E.coli K165 by elevating levels of sigma 32 (mechanism unknown). This Rhizobium meliloti (strain 1021) (Ensifer meliloti) protein is RpoH suppressor (suhR).